We begin with the raw amino-acid sequence, 247 residues long: Terpene cyclase adrI (247 aa).

5 helical membrane passes run 20 to 40 (VAEF…FSML), 51 to 71 (TGIF…FIYP), 76 to 96 (HWEG…FFII), 112 to 132 (NLYF…YSFA), and 141 to 161 (FFYG…AQIL). An N-linked (GlcNAc...) asparagine glycan is attached at N164. 2 consecutive transmembrane segments (helical) span residues 179–199 (FGGF…GPWF) and 205–225 (KFYI…YYVI).

This sequence belongs to the paxB family.

The protein resides in the membrane. Its pathway is secondary metabolite biosynthesis; terpenoid biosynthesis. Functionally, terpene cyclase; part of the gene cluster that mediates the biosynthesis of andrastins, meroterpenoid compounds that exhibit inhibitory activity against ras farnesyltransferase, suggesting that they could be promising leads for antitumor agents. The first step of the pathway is the synthesis of 3,5-dimethylorsellinic acid (DMOA) by the polyketide synthase adrD via condensation of one acetyl-CoA starter unit with 3 malonyl-CoA units and 2 methylations. DMAO is then converted to farnesyl-DMAO by the prenyltransferase adrG. The methyltransferase adrK catalyzes the methylation of the carboxyl group of farnesyl-DMAO to farnesyl-DMAO methyl ester which is further converted to epoxyfarnesyl-DMAO methyl ester by the FAD-dependent monooxygenase adrH. The terpene cyclase adrI then catalyzes the carbon skeletal rearrangement to generate the andrastin E, the first compound in the pathway having the andrastin scaffold, with the tetracyclic ring system. The post-cyclization tailoring enzymes adrF, adrE, adrJ, and adrA, are involved in the conversion of andrastin E into andrastin A. The short chain dehydrogenase adrF is responsible for the oxidation of the C-3 a hydroxyl group of andrastin E to yield the corresponding ketone, andrastin D. The ketoreductase adrE stereoselectively reduces the carbonyl moiety to reverse the stereochemistry of the C-3 position to yield andrastin F. The acetyltransferase adrJ is the acetyltransferase that attaches the acetyl group to the C-3 hydroxyl group of andrastin F to yield andrastin C. Finally, the cytochrome P450 monooxygenase adrA catalyzes two sequential oxidation reactions of the C-23 methyl group, to generate the corresponding alcohol andrastin B, and aldehyde andrastin A. The sequence is that of Terpene cyclase adrI from Penicillium rubens (strain ATCC 28089 / DSM 1075 / NRRL 1951 / Wisconsin 54-1255) (Penicillium chrysogenum).